The sequence spans 329 residues: Tryptophan--tRNA ligase (329 aa).

ATP is bound by residues 9–11 and 17–18; these read QPS and GN. The short motif at 10-18 is the 'HIGH' region element; it reads PSGIPTIGN. Asp-133 is a binding site for L-tryptophan. Residues 145-147, Val-184, and 193-197 each bind ATP; these read GDD and KMSKS. Residues 193–197 carry the 'KMSKS' region motif; the sequence is KMSKS.

It belongs to the class-I aminoacyl-tRNA synthetase family. As to quaternary structure, homodimer.

Its subcellular location is the cytoplasm. The catalysed reaction is tRNA(Trp) + L-tryptophan + ATP = L-tryptophyl-tRNA(Trp) + AMP + diphosphate + H(+). Its function is as follows. Catalyzes the attachment of tryptophan to tRNA(Trp). The polypeptide is Tryptophan--tRNA ligase (Staphylococcus aureus (strain MRSA252)).